Reading from the N-terminus, the 151-residue chain is Secreted RxLR effector protein 30 (151 aa).

Residues 1–19 form the signal peptide; the sequence is MRSSTILIVLGIAILAVNG. The RxLR-dEER motif lies at 38-53; sequence RLLRSTSTEHETDEER.

Belongs to the RxLR effector family.

The protein localises to the secreted. The protein resides in the host nucleus. Effector that acts as a broad suppressor of cell death to interrupt plant immunity. Inhibits cell death induced by cell death-inducing proteins, including the PAMP elicitor INF1 from P.infestans. In Plasmopara viticola (Downy mildew of grapevine), this protein is Secreted RxLR effector protein 30.